The following is a 312-amino-acid chain: Probable splicing factor, arginine/serine-rich 1 (312 aa).

The region spanning 3–73 (ARIYIGRLTS…ERVILDYSKP (71 aa)) is the RRM 1 domain. Disordered stretches follow at residues 69-125 (DYSK…GRPY) and 196-312 (KMID…DGDN). Residues 74 to 90 (RGGGGDRGGFGGGGRGG) are compositionally biased toward gly residues. A compositionally biased stretch (basic and acidic residues) spans 103 to 121 (GRDRFDRYDRGPPRRESRY). In terms of domain architecture, RRM 2 spans 129–202 (HRVVVENLSS…RKIKMIDDSQ (74 aa)). Positions 206 to 259 (SRSRSNSRSRSRSRSRDRRRSRSRSSSRSKSRSRSPPKRSRRESKSKSRSRSRS) are enriched in basic residues.

The protein belongs to the splicing factor SR family. Extensively phosphorylated on serine residues in the RS domain.

The protein resides in the nucleus. In terms of biological role, plays a functionally redundant role in spermatogenesis and growth rate control. The protein is Probable splicing factor, arginine/serine-rich 1 (rsp-1) of Caenorhabditis elegans.